The chain runs to 548 residues: Chaperonin GroEL (548 aa).

Residues 29 to 32 (TMGP), Lys-50, 86 to 90 (DGTTT), Gly-414, 478 to 480 (NAA), and Asp-494 each bind ATP.

The protein belongs to the chaperonin (HSP60) family. Forms a cylinder of 14 subunits composed of two heptameric rings stacked back-to-back. Interacts with the co-chaperonin GroES.

It localises to the cytoplasm. The enzyme catalyses ATP + H2O + a folded polypeptide = ADP + phosphate + an unfolded polypeptide.. In terms of biological role, together with its co-chaperonin GroES, plays an essential role in assisting protein folding. The GroEL-GroES system forms a nano-cage that allows encapsulation of the non-native substrate proteins and provides a physical environment optimized to promote and accelerate protein folding. May play a protective role against the defense mechanisms generated by the infected macrophages. The polypeptide is Chaperonin GroEL (Legionella pneumophila subsp. pneumophila (strain Philadelphia 1 / ATCC 33152 / DSM 7513)).